Here is a 341-residue protein sequence, read N- to C-terminus: Glyceraldehyde-3-phosphate dehydrogenase 2 (341 aa).

Residues 12–13, arginine 78, and threonine 120 each bind NAD(+); that span reads RI. D-glyceraldehyde 3-phosphate contacts are provided by residues 152–154 and threonine 183; that span reads SCT. The active-site Nucleophile is cysteine 153. Asparagine 184 is an NAD(+) binding site. D-glyceraldehyde 3-phosphate contacts are provided by residues arginine 198, 211–212, and arginine 234; that span reads TG. An NAD(+)-binding site is contributed by asparagine 313.

Belongs to the glyceraldehyde-3-phosphate dehydrogenase family. As to quaternary structure, homotetramer.

The protein resides in the cytoplasm. The enzyme catalyses D-glyceraldehyde 3-phosphate + phosphate + NAD(+) = (2R)-3-phospho-glyceroyl phosphate + NADH + H(+). It functions in the pathway carbohydrate degradation; glycolysis; pyruvate from D-glyceraldehyde 3-phosphate: step 1/5. Functionally, catalyzes the oxidative phosphorylation of glyceraldehyde 3-phosphate (G3P) to 1,3-bisphosphoglycerate (BPG) using the cofactor NAD. The first reaction step involves the formation of a hemiacetal intermediate between G3P and a cysteine residue, and this hemiacetal intermediate is then oxidized to a thioester, with concomitant reduction of NAD to NADH. The reduced NADH is then exchanged with the second NAD, and the thioester is attacked by a nucleophilic inorganic phosphate to produce BPG. In Staphylococcus epidermidis (strain ATCC 35984 / DSM 28319 / BCRC 17069 / CCUG 31568 / BM 3577 / RP62A), this protein is Glyceraldehyde-3-phosphate dehydrogenase 2 (gapA2).